The chain runs to 96 residues: Small ribosomal subunit protein bS6 (96 aa).

Belongs to the bacterial ribosomal protein bS6 family.

In terms of biological role, binds together with bS18 to 16S ribosomal RNA. The polypeptide is Small ribosomal subunit protein bS6 (Salinispora tropica (strain ATCC BAA-916 / DSM 44818 / JCM 13857 / NBRC 105044 / CNB-440)).